We begin with the raw amino-acid sequence, 504 residues long: Sodium-coupled neutral amino acid symporter 2 (504 aa).

Residues Met-1–Thr-28 form a disordered region. Topologically, residues Met-1–Ser-79 are cytoplasmic. Positions Met-1–Met-99 are regulates protein turnover upon amino acid deprivation. The span at Ser-19–Thr-28 shows a compositional bias: low complexity. A helical transmembrane segment spans residues Val-80–Met-99. Asn-85 is a binding site for Na(+). Over Ala-100–Ala-105 the chain is Extracellular. The helical transmembrane segment at Met-106–Leu-126 threads the bilayer. Residues Lys-127–Asn-161 lie on the Cytoplasmic side of the membrane. Residues Phe-162–Ile-180 form a helical membrane-spanning segment. The Extracellular portion of the chain corresponds to Arg-181–Asn-189. A helical transmembrane segment spans residues Ala-190–Leu-210. The Cytoplasmic portion of the chain corresponds to Ser-211–Tyr-218. The helical transmembrane segment at Leu-219 to Tyr-239 threads the bilayer. Topologically, residues Lys-240–Thr-285 are extracellular. Cys-246 and Cys-274 are oxidised to a cystine. N-linked (GlcNAc...) asparagine glycosylation is found at Asn-254 and Asn-258. Residues Val-286–Tyr-306 traverse the membrane as a helical segment. At Glu-307–Asn-322 the chain is on the cytoplasmic side. A helical membrane pass occupies residues Val-323–Phe-343. The Extracellular segment spans residues Asn-344–Val-364. The helical transmembrane segment at Leu-365–Phe-385 threads the bilayer. Thr-379 contacts Na(+). Over Pro-386–His-406 the chain is Cytoplasmic. The helical transmembrane segment at Ile-407–Ile-427 threads the bilayer. The Extracellular portion of the chain corresponds to Arg-428 to Asp-429. A helical transmembrane segment spans residues Ile-430–Phe-450. The Cytoplasmic segment spans residues Tyr-451–Lys-465. A helical transmembrane segment spans residues Ile-466–Met-488. Over Asp-489–His-504 the chain is Extracellular.

The protein belongs to the amino acid/polyamine transporter 2 family.

It is found in the cell membrane. It catalyses the reaction L-alanine(in) + Na(+)(in) = L-alanine(out) + Na(+)(out). The catalysed reaction is glycine(in) + Na(+)(in) = glycine(out) + Na(+)(out). The enzyme catalyses L-serine(in) + Na(+)(in) = L-serine(out) + Na(+)(out). It carries out the reaction L-proline(in) + Na(+)(in) = L-proline(out) + Na(+)(out). It catalyses the reaction L-methionine(in) + Na(+)(in) = L-methionine(out) + Na(+)(out). The catalysed reaction is L-histidine(in) + Na(+)(in) = L-histidine(out) + Na(+)(out). The enzyme catalyses L-asparagine(in) + Na(+)(in) = L-asparagine(out) + Na(+)(out). It carries out the reaction L-glutamine(in) + Na(+)(in) = L-glutamine(out) + Na(+)(out). It catalyses the reaction L-threonine(in) + Na(+)(in) = L-threonine(out) + Na(+)(out). The catalysed reaction is L-leucine(in) + Na(+)(in) = L-leucine(out) + Na(+)(out). The enzyme catalyses L-phenylalanine(in) + Na(+)(in) = L-phenylalanine(out) + Na(+)(out). Its activity is regulated as follows. Inhibited by N-methyl-D-glucamine. Inhibited by choline. Allosteric regulation of sodium ions binding by pH. Its function is as follows. Symporter that cotransports neutral amino acids and sodium ions from the extracellular to the intracellular side of the cell membrane. The transport is pH-sensitive, Li(+)-intolerant, electrogenic, driven by the Na(+) electrochemical gradient and cotransports of neutral amino acids and sodium ions with a stoichiometry of 1:1. In Danio rerio (Zebrafish), this protein is Sodium-coupled neutral amino acid symporter 2.